Consider the following 187-residue polypeptide: uncharacterized protein (187 aa).

Positions 139 to 168 (ESKDRKALKNAARKAEKNAHEESSYFRVDD) are enriched in basic and acidic residues. The tract at residues 139-172 (ESKDRKALKNAARKAEKNAHEESSYFRVDDPEPE) is disordered.

This is an uncharacterized protein from Caenorhabditis elegans.